The primary structure comprises 54 residues: Protein YojO (54 aa).

The protein belongs to the YojO family.

In Escherichia coli (strain K12), this protein is Protein YojO (yojO).